The following is a 237-amino-acid chain: N-alpha-acetyltransferase 40 (237 aa).

Residue G2 is the site of N-myristoyl glycine attachment. The region spanning 63-216 (SGLEPATVDW…EDCSYEILSR (154 aa)) is the N-acetyltransferase domain. Residues Y85, 127 to 129 (DVE), and Y138 each bind substrate. Residues 140–142 (VQL) and 148–153 (RKGLGK) contribute to the acetyl-CoA site. T174 serves as a coordination point for substrate. N179 provides a ligand contact to acetyl-CoA. The substrate site is built by S197 and Y211.

This sequence belongs to the acetyltransferase family. NAA40 subfamily.

The protein localises to the cytoplasm. It localises to the nucleus. It catalyses the reaction N-terminal L-seryl-[histone H4] + acetyl-CoA = N-terminal N(alpha)-acetyl-L-seryl-[histone H4] + CoA + H(+). The catalysed reaction is N-terminal L-seryl-[histone H2A] + acetyl-CoA = N-terminal N(alpha)-acetyl-L-seryl-[histone H2A] + CoA + H(+). Its function is as follows. N-alpha-acetyltransferase that specifically mediates the acetylation of the N-terminal residues of histones H4 and H2A. In contrast to other N-alpha-acetyltransferase, has a very specific selectivity for histones H4 and H2A N-terminus and specifically recognizes the 'Ser-Gly-Arg-Gly sequence'. Acts as a negative regulator of apoptosis. May play a role in hepatic lipid metabolism. The sequence is that of N-alpha-acetyltransferase 40 from Mus musculus (Mouse).